Here is a 149-residue protein sequence, read N- to C-terminus: Large ribosomal subunit protein bL9 (149 aa).

This sequence belongs to the bacterial ribosomal protein bL9 family.

Functionally, binds to the 23S rRNA. This chain is Large ribosomal subunit protein bL9, found in Geobacillus sp. (strain WCH70).